An 83-amino-acid polypeptide reads, in one-letter code: Antitoxin ParD1 (83 aa).

Positions 33–60 form a coiled coil; that stretch reads IRSALRLLEDRETQLRALREALEAGERS. The disordered stretch occupies residues 54–83; sequence LEAGERSGSSTPFDFDGFLGRKRADASRGR.

Belongs to the ParD antitoxin family.

In terms of biological role, antitoxin component of a type II toxin-antitoxin (TA) system. This Mycobacterium tuberculosis (strain CDC 1551 / Oshkosh) protein is Antitoxin ParD1 (parD1).